We begin with the raw amino-acid sequence, 442 residues long: ATP-dependent RNA helicase SUB2-2 (442 aa).

The short motif at 58–86 is the Q motif element; sequence TGFKDFLLKPELARAIIDCGFEHPSEVQQ. Residues 89-264 form the Helicase ATP-binding domain; it reads IPQSIHGTDV…RRFLQNPLEI (176 aa). Residue 102 to 109 coordinates ATP; that stretch reads AKSGLGKT. The short motif at 211–214 is the DECD box element; the sequence is DECD. The region spanning 292–437 is the Helicase C-terminal domain; the sequence is KLAQLLDDLE…EFPEEGIDPS (146 aa).

The protein belongs to the DEAD box helicase family. DECD subfamily.

It is found in the nucleus. The enzyme catalyses ATP + H2O = ADP + phosphate + H(+). Functionally, ATP-binding RNA helicase involved in transcription elongation and required for the export of mRNA out of the nucleus. SUB2 also plays a role in pre-mRNA splicing and spliceosome assembly. May be involved in rDNA and telomeric silencing, and maintenance of genome integrity. This Vanderwaltozyma polyspora (strain ATCC 22028 / DSM 70294 / BCRC 21397 / CBS 2163 / NBRC 10782 / NRRL Y-8283 / UCD 57-17) (Kluyveromyces polysporus) protein is ATP-dependent RNA helicase SUB2-2 (SUB2-2).